The primary structure comprises 121 residues: MRFTKDHEWVALDGDVATIGITAHAAEQLGDVVFVEVPEVGRQVKAGDAFAVVESVKAASDVYAPVTGEVVEANEALSGAPETVNAEPEAGGWFAKVRVADPAELDGLMDKAAYDAFVANS.

The region spanning 16 to 98 is the Lipoyl-binding domain; that stretch reads VATIGITAHA…EAGGWFAKVR (83 aa). The residue at position 57 (K57) is an N6-lipoyllysine.

The protein belongs to the GcvH family. As to quaternary structure, the glycine cleavage system is composed of four proteins: P, T, L and H. The cofactor is (R)-lipoate.

Its function is as follows. The glycine cleavage system catalyzes the degradation of glycine. The H protein shuttles the methylamine group of glycine from the P protein to the T protein. The sequence is that of Glycine cleavage system H protein from Phenylobacterium zucineum (strain HLK1).